A 498-amino-acid polypeptide reads, in one-letter code: Sulfate adenylyltransferase subunit 1 (498 aa).

Positions 30–246 constitute a tr-type G domain; sequence TRPLRLITCG…LELATTRSAQ (217 aa). Positions 39 to 46 are G1; it reads GSVDDGKS. 39–46 provides a ligand contact to GTP; the sequence is GSVDDGKS. Residues 97 to 101 form a G2 region; that stretch reads GITID. The segment at 118–121 is G3; the sequence is DTPG. GTP contacts are provided by residues 118-122 and 173-176; these read DTPGH and NKID. The tract at residues 173-176 is G4; sequence NKID. Residues 210-212 form a G5 region; sequence SAL.

It belongs to the TRAFAC class translation factor GTPase superfamily. Classic translation factor GTPase family. CysN/NodQ subfamily. In terms of assembly, heterodimer composed of CysD, the smaller subunit, and CysN.

It catalyses the reaction sulfate + ATP + H(+) = adenosine 5'-phosphosulfate + diphosphate. It participates in sulfur metabolism; hydrogen sulfide biosynthesis; sulfite from sulfate: step 1/3. Its function is as follows. With CysD forms the ATP sulfurylase (ATPS) that catalyzes the adenylation of sulfate producing adenosine 5'-phosphosulfate (APS) and diphosphate, the first enzymatic step in sulfur assimilation pathway. APS synthesis involves the formation of a high-energy phosphoric-sulfuric acid anhydride bond driven by GTP hydrolysis by CysN coupled to ATP hydrolysis by CysD. The sequence is that of Sulfate adenylyltransferase subunit 1 from Rhizobium meliloti (strain 1021) (Ensifer meliloti).